The following is a 105-amino-acid chain: MANRIKKGDQVVINTGKDKGKQGEVLRVDGDRVIVSNANLIKRHTKPNPQAGVAGGVVEREASIHISNVNIVNPATGKGERVGFKVLEDGRKLRVFRSSGEALDA.

Belongs to the universal ribosomal protein uL24 family. As to quaternary structure, part of the 50S ribosomal subunit.

In terms of biological role, one of two assembly initiator proteins, it binds directly to the 5'-end of the 23S rRNA, where it nucleates assembly of the 50S subunit. Its function is as follows. One of the proteins that surrounds the polypeptide exit tunnel on the outside of the subunit. This Xanthomonas oryzae pv. oryzae (strain PXO99A) protein is Large ribosomal subunit protein uL24.